The sequence spans 114 residues: Phosphoribosyl-ATP pyrophosphatase (114 aa).

This sequence belongs to the PRA-PH family.

It is found in the cytoplasm. The enzyme catalyses 1-(5-phospho-beta-D-ribosyl)-ATP + H2O = 1-(5-phospho-beta-D-ribosyl)-5'-AMP + diphosphate + H(+). The protein operates within amino-acid biosynthesis; L-histidine biosynthesis; L-histidine from 5-phospho-alpha-D-ribose 1-diphosphate: step 2/9. The chain is Phosphoribosyl-ATP pyrophosphatase from Leuconostoc mesenteroides subsp. mesenteroides (strain ATCC 8293 / DSM 20343 / BCRC 11652 / CCM 1803 / JCM 6124 / NCDO 523 / NBRC 100496 / NCIMB 8023 / NCTC 12954 / NRRL B-1118 / 37Y).